Reading from the N-terminus, the 761-residue chain is Ribonucleoside-diphosphate reductase subunit alpha (761 aa).

The ATP-cone domain occupies 5 to 95; sequence LFVTKRNGKI…IFHLRKKAFG (91 aa). Residues lysine 9, 15-21, threonine 55, and lysine 91 contribute to the ATP site; that span reads ELINLDK. Threonine 209 is a GDP binding site. Cysteine 225 and cysteine 462 are joined by a disulfide. Residues 232-234, arginine 262, and arginine 269 each bind dTTP; that span reads DNL. Asparagine 437 provides a ligand contact to GDP. The active-site Proton acceptor is the asparagine 437. The active-site Cysteine radical intermediate is cysteine 439. GDP is bound by residues glutamate 441 and 623 to 625; that span reads ETS. Glutamate 441 serves as the catalytic Proton acceptor.

This sequence belongs to the ribonucleoside diphosphate reductase large chain family. As to quaternary structure, tetramer of two alpha and two beta subunits.

It catalyses the reaction a 2'-deoxyribonucleoside 5'-diphosphate + [thioredoxin]-disulfide + H2O = a ribonucleoside 5'-diphosphate + [thioredoxin]-dithiol. Under complex allosteric control mediated by deoxynucleoside triphosphates and ATP binding to separate specificity and activation sites on the alpha subunit. The type of nucleotide bound at the specificity site determines substrate preference. It seems probable that ATP makes the enzyme reduce CDP and UDP, dGTP favors ADP reduction and dTTP favors GDP reduction. Stimulated by ATP and inhibited by dATP binding to the activity site. Provides the precursors necessary for DNA synthesis. Catalyzes the biosynthesis of deoxyribonucleotides from the corresponding ribonucleotides. This chain is Ribonucleoside-diphosphate reductase subunit alpha (nrdA), found in Buchnera aphidicola subsp. Baizongia pistaciae (strain Bp).